Here is a 192-residue protein sequence, read N- to C-terminus: Interferon epsilon (192 aa).

An N-terminal signal peptide occupies residues 1 to 21 (MVHRQLPETVLLLLVSSTIFS). C52 and C162 are oxidised to a cystine.

This sequence belongs to the alpha/beta interferon family. In terms of tissue distribution, expressed at very high levels in uterus and, at much lower levels, in ovary and cervix. Very low levels, if any, in other organs. In the endometrium, expressed in the luminal and glandular epithelial cells (at protein level).

Its subcellular location is the secreted. Its function is as follows. Type I interferon required for maintaining basal levels of IFN-regulated genes, including 2'-5'-oligoadenylate synthetase, IRF7 and ISG15, in the female reproductive tract. Directly mediates protection against viral, including HSV-2, and bacterial, including Chlamydia muridarum, genital infections. This is Interferon epsilon (Ifne) from Mus musculus (Mouse).